The chain runs to 246 residues: MKNIKIEICAGSFEDAVLAEKAGASRIELNSSLFLGGLTPSLGTLKLVKKETHLEVMAMVRPRAAGFFYSSYEYKTMLEDAKLFIDNGADGLVFGFLKKDGTIDAKRCEALIKIAESRDKVFHRAIDVVPDPLKALDELISLGFTRVLTSGQEPTAYEGADLIAKMVKRAKGRIEILPGGGITEKNASKIIKLTGVDQIHFAALKRREEPSTKANPSIYYGGALYPPEDSIEVAGLDEMTKVIKSL.

The protein belongs to the CutC family.

The protein localises to the cytoplasm. The sequence is that of PF03932 family protein CutC from Treponema denticola (strain ATCC 35405 / DSM 14222 / CIP 103919 / JCM 8153 / KCTC 15104).